A 221-amino-acid polypeptide reads, in one-letter code: Ribosomal RNA small subunit methyltransferase G (221 aa).

S-adenosyl-L-methionine is bound by residues Gly-85, Leu-90, 138 to 139, and Arg-151; that span reads AE.

It belongs to the methyltransferase superfamily. RNA methyltransferase RsmG family.

It is found in the cytoplasm. It carries out the reaction guanosine(527) in 16S rRNA + S-adenosyl-L-methionine = N(7)-methylguanosine(527) in 16S rRNA + S-adenosyl-L-homocysteine. In terms of biological role, specifically methylates the N7 position of guanine in position 527 of 16S rRNA. This chain is Ribosomal RNA small subunit methyltransferase G, found in Caulobacter sp. (strain K31).